The chain runs to 285 residues: Polyamine aminopropyltransferase (285 aa).

The PABS domain maps to 5–238; the sequence is EMWYETLHTG…GIMTFAWASD (234 aa). Glutamine 33 serves as a coordination point for S-methyl-5'-thioadenosine. Spermidine contacts are provided by histidine 64 and aspartate 88. S-methyl-5'-thioadenosine-binding positions include glutamate 108 and 140–141; that span reads DG. Catalysis depends on aspartate 158, which acts as the Proton acceptor. A spermidine-binding site is contributed by 158–161; the sequence is DCTD. Residue proline 165 participates in S-methyl-5'-thioadenosine binding.

The protein belongs to the spermidine/spermine synthase family. Homodimer or homotetramer.

The protein resides in the cytoplasm. It carries out the reaction S-adenosyl 3-(methylsulfanyl)propylamine + putrescine = S-methyl-5'-thioadenosine + spermidine + H(+). The protein operates within amine and polyamine biosynthesis; spermidine biosynthesis; spermidine from putrescine: step 1/1. In terms of biological role, catalyzes the irreversible transfer of a propylamine group from the amino donor S-adenosylmethioninamine (decarboxy-AdoMet) to putrescine (1,4-diaminobutane) to yield spermidine. In Erwinia tasmaniensis (strain DSM 17950 / CFBP 7177 / CIP 109463 / NCPPB 4357 / Et1/99), this protein is Polyamine aminopropyltransferase.